Here is a 365-residue protein sequence, read N- to C-terminus: Methylthioribose-1-phosphate isomerase (365 aa).

Residues 53–55, Arg-90, and Gln-201 contribute to the substrate site; that span reads RGA. The active-site Proton donor is the Asp-242. Position 252–253 (252–253) interacts with substrate; the sequence is NK.

It belongs to the eIF-2B alpha/beta/delta subunits family. MtnA subfamily.

The catalysed reaction is 5-(methylsulfanyl)-alpha-D-ribose 1-phosphate = 5-(methylsulfanyl)-D-ribulose 1-phosphate. It functions in the pathway amino-acid biosynthesis; L-methionine biosynthesis via salvage pathway; L-methionine from S-methyl-5-thio-alpha-D-ribose 1-phosphate: step 1/6. Its function is as follows. Catalyzes the interconversion of methylthioribose-1-phosphate (MTR-1-P) into methylthioribulose-1-phosphate (MTRu-1-P). The polypeptide is Methylthioribose-1-phosphate isomerase (Methylorubrum extorquens (strain CM4 / NCIMB 13688) (Methylobacterium extorquens)).